The sequence spans 316 residues: Transaldolase 1 (316 aa).

Lysine 131 (schiff-base intermediate with substrate) is an active-site residue.

The protein belongs to the transaldolase family. Type 1 subfamily. As to quaternary structure, homodimer.

It localises to the cytoplasm. The catalysed reaction is D-sedoheptulose 7-phosphate + D-glyceraldehyde 3-phosphate = D-erythrose 4-phosphate + beta-D-fructose 6-phosphate. It functions in the pathway carbohydrate degradation; pentose phosphate pathway; D-glyceraldehyde 3-phosphate and beta-D-fructose 6-phosphate from D-ribose 5-phosphate and D-xylulose 5-phosphate (non-oxidative stage): step 2/3. Functionally, transaldolase is important for the balance of metabolites in the pentose-phosphate pathway. This Pectobacterium atrosepticum (strain SCRI 1043 / ATCC BAA-672) (Erwinia carotovora subsp. atroseptica) protein is Transaldolase 1.